The sequence spans 293 residues: Nucleotide-binding protein CKR_3143 (293 aa).

8–15 (GLSGAGKT) is a binding site for ATP. Residue 59–62 (DIRG) coordinates GTP.

It belongs to the RapZ-like family.

Displays ATPase and GTPase activities. The polypeptide is Nucleotide-binding protein CKR_3143 (Clostridium kluyveri (strain NBRC 12016)).